Reading from the N-terminus, the 651-residue chain is Probable potassium transport system protein Kup (651 aa).

12 helical membrane-spanning segments follow: residues 41–61 (LVLG…IYAF), 82–102 (VVSL…VLFV), 130–150 (LILG…VITP), 163–183 (IVAP…LVTL), 194–214 (VAIV…ASGL), 235–255 (FLTV…LAMT), 276–296 (WLWI…AFIL), 309–329 (MIPS…TVIA), 366–386 (IYIP…VLGF), 395–415 (AYGI…YIVM), 426–446 (ALPI…ANII), and 450–470 (EGGW…WTWV).

The protein belongs to the HAK/KUP transporter (TC 2.A.72) family.

Its subcellular location is the cell inner membrane. It catalyses the reaction K(+)(in) + H(+)(in) = K(+)(out) + H(+)(out). Its function is as follows. Transport of potassium into the cell. Likely operates as a K(+):H(+) symporter. The protein is Probable potassium transport system protein Kup of Brucella suis (strain ATCC 23445 / NCTC 10510).